A 229-amino-acid chain; its full sequence is Heptaprenylglyceryl phosphate synthase (229 aa).

K12 provides a ligand contact to sn-glycerol 1-phosphate. Mg(2+) is bound by residues D14 and S40. Sn-glycerol 1-phosphate is bound by residues 159–164 (YLEYSG), G189, and 209–210 (GN).

The protein belongs to the GGGP/HepGP synthase family. Group I subfamily. Homodimer. Mg(2+) serves as cofactor.

The catalysed reaction is sn-glycerol 1-phosphate + all-trans-heptaprenyl diphosphate = 3-heptaprenyl-sn-glycero-1-phosphate + diphosphate. It functions in the pathway membrane lipid metabolism; glycerophospholipid metabolism. In terms of biological role, prenyltransferase that catalyzes in vivo the transfer of the heptaprenyl moiety of heptaprenyl pyrophosphate (HepPP; 35 carbon atoms) to the C3 hydroxyl of sn-glycerol-1-phosphate (G1P), producing heptaprenylglyceryl phosphate (HepGP). This reaction is an ether-bond-formation step in the biosynthesis of archaea-type G1P-based membrane lipids found in Bacillales. In Bacillus cereus (strain AH187), this protein is Heptaprenylglyceryl phosphate synthase.